A 457-amino-acid polypeptide reads, in one-letter code: Glutamate--tRNA ligase 2 (457 aa).

The short motif at 8–18 (PSPTGYIHIGN) is the 'HIGH' region element. Residues 249-253 (GFSKR) carry the 'KMSKS' region motif. An ATP-binding site is contributed by lysine 252.

Belongs to the class-I aminoacyl-tRNA synthetase family. Glutamate--tRNA ligase type 1 subfamily. In terms of assembly, monomer.

It localises to the cytoplasm. It catalyses the reaction tRNA(Glu) + L-glutamate + ATP = L-glutamyl-tRNA(Glu) + AMP + diphosphate. Catalyzes the attachment of glutamate to tRNA(Glu) in a two-step reaction: glutamate is first activated by ATP to form Glu-AMP and then transferred to the acceptor end of tRNA(Glu). This chain is Glutamate--tRNA ligase 2, found in Bartonella tribocorum (strain CIP 105476 / IBS 506).